Here is a 205-residue protein sequence, read N- to C-terminus: EQQKFSPRYIELVVVADHGMFKKYNSNLNTIRKWVHEMVNSMNGFYRSVDVTASLANLEVWSKKDLINVQKDSRETLKSFGEWRERDLLPRISHDNAQLLTAIVFDGHTIGRAYTGGMCDPRHSVGVVMDHSPKNLQVAVTMAHELGHNLGMHHDGNQCHCDAASCIMADSLSVVLSYEFSDCSQNQYQTYLTKHNPQCILNEPL.

One can recognise a Peptidase M12B domain in the interval 8–204 (RYIELVVVAD…HNPQCILNEP (197 aa)). Residues Glu-11 and Asp-95 each contribute to the Ca(2+) site. 3 disulfides stabilise this stretch: Cys-119-Cys-199, Cys-159-Cys-183, and Cys-161-Cys-166. Position 144 (His-144) interacts with Zn(2+). Glu-145 is a catalytic residue. His-148 and His-154 together coordinate Zn(2+). Ca(2+)-binding residues include Cys-199 and Asn-202.

This sequence belongs to the venom metalloproteinase (M12B) family. P-I subfamily. In terms of assembly, monomer. Zn(2+) serves as cofactor. As to expression, expressed by the venom gland.

The protein resides in the secreted. With respect to regulation, inhibited by EDTA. Not inhibited by the serine proteinase inhibitors aprotinin and benzamidine. Snake venom zinc metalloproteinase that cleaves the alpha chain of fibrinogen (FGA) first followed by the beta chain (FGB) and shows no effect on the gamma chain. Cleaves only the beta chain of fibrin, leaving the gamma-dimer untouched. Shows proteolytic activity towards azocasein. Causes defibrinogenation when intraperitoneally administered on mice. The polypeptide is Snake venom metalloproteinase BmooMPalpha-I (Bothrops moojeni (Lance-headed viper)).